An 820-amino-acid chain; its full sequence is G-type lectin S-receptor-like serine/threonine-protein kinase At1g11280 (820 aa).

The N-terminal stretch at 1-28 (MGIHLGEIGIVLFPWFLWLSLFLSCGYA) is a signal peptide. One can recognise a Bulb-type lectin domain in the interval 29-148 (AITISSPLTL…VSENLLWQSF (120 aa)). Residues 29–434 (AITISSPLTL…SELAGSRRTK (406 aa)) lie on the Extracellular side of the membrane. N-linked (GlcNAc...) asparagine glycans are attached at residues Asn-57, Asn-92, Asn-98, Asn-241, and Asn-272. The region spanning 283 to 319 (PANLCDLYGACGPFGLCVTSNPTKCKCMKGFVPKYKE) is the EGF-like domain. Disulfide bonds link Cys-287–Cys-299 and Cys-293–Cys-307. N-linked (GlcNAc...) asparagine glycosylation is found at Asn-325, Asn-341, and Asn-384. The 85-residue stretch at 338–422 (CQANLSTKTQ…VGGEFLSIRL (85 aa)) folds into the PAN domain. 2 disulfides stabilise this stretch: Cys-377–Cys-398 and Cys-381–Cys-387. A helical transmembrane segment spans residues 435–455 (IIVGSISLSIFVILAFGSYKY). The Cytoplasmic segment spans residues 456-820 (WRYRAKQNVG…HVTQTEIYGR (365 aa)). In terms of domain architecture, Protein kinase spans 505 to 792 (FNVSNKLGQG…DLPRPKQPLF (288 aa)). ATP-binding positions include 511 to 519 (LGQGGFGPV) and Lys-533. Residues Ser-539 and Ser-554 each carry the phosphoserine modification. A caM-binding region spans residues 594–611 (TLKLQIDWPKRFNIIQGV). Residue Asp-630 is the Proton acceptor of the active site. 2 positions are modified to phosphoserine: Ser-634 and Ser-647. Thr-664 is subject to Phosphothreonine. Residues Ser-707, Ser-708, and Ser-808 each carry the phosphoserine modification. Thr-815 is subject to Phosphothreonine.

This sequence belongs to the protein kinase superfamily. Ser/Thr protein kinase family.

The protein resides in the cell membrane. It carries out the reaction L-seryl-[protein] + ATP = O-phospho-L-seryl-[protein] + ADP + H(+). The catalysed reaction is L-threonyl-[protein] + ATP = O-phospho-L-threonyl-[protein] + ADP + H(+). The sequence is that of G-type lectin S-receptor-like serine/threonine-protein kinase At1g11280 from Arabidopsis thaliana (Mouse-ear cress).